A 262-amino-acid chain; its full sequence is tRNA (guanine-N(1)-)-methyltransferase (262 aa).

Residues Gly-112 and 132-137 (IGDYIL) contribute to the S-adenosyl-L-methionine site.

It belongs to the RNA methyltransferase TrmD family. In terms of assembly, homodimer.

The protein localises to the cytoplasm. It carries out the reaction guanosine(37) in tRNA + S-adenosyl-L-methionine = N(1)-methylguanosine(37) in tRNA + S-adenosyl-L-homocysteine + H(+). Functionally, specifically methylates guanosine-37 in various tRNAs. The sequence is that of tRNA (guanine-N(1)-)-methyltransferase from Desulfatibacillum aliphaticivorans.